The following is a 311-amino-acid chain: Aspartate carbamoyltransferase catalytic subunit (311 aa).

2 residues coordinate carbamoyl phosphate: Arg-58 and Thr-59. An L-aspartate-binding site is contributed by Lys-86. Positions 108, 136, and 139 each coordinate carbamoyl phosphate. The L-aspartate site is built by Arg-169 and Arg-224. Residues Gly-265 and Pro-266 each contribute to the carbamoyl phosphate site.

This sequence belongs to the aspartate/ornithine carbamoyltransferase superfamily. ATCase family. Heterododecamer (2C3:3R2) of six catalytic PyrB chains organized as two trimers (C3), and six regulatory PyrI chains organized as three dimers (R2).

It catalyses the reaction carbamoyl phosphate + L-aspartate = N-carbamoyl-L-aspartate + phosphate + H(+). It functions in the pathway pyrimidine metabolism; UMP biosynthesis via de novo pathway; (S)-dihydroorotate from bicarbonate: step 2/3. Its function is as follows. Catalyzes the condensation of carbamoyl phosphate and aspartate to form carbamoyl aspartate and inorganic phosphate, the committed step in the de novo pyrimidine nucleotide biosynthesis pathway. In Geotalea daltonii (strain DSM 22248 / JCM 15807 / FRC-32) (Geobacter daltonii), this protein is Aspartate carbamoyltransferase catalytic subunit.